Consider the following 231-residue polypeptide: Uridylate kinase (231 aa).

6–9 (KLSG) lines the ATP pocket. Positions 14-19 (GEGGRG) are involved in allosteric activation by GTP. Residues Gly-49 and Arg-53 each contribute to the ATP site. UMP-binding positions include Asp-66 and 127 to 134 (TSNPFFTT). ATP contacts are provided by Thr-154, Tyr-160, and Asp-163.

The protein belongs to the UMP kinase family. Homohexamer.

Its subcellular location is the cytoplasm. The enzyme catalyses UMP + ATP = UDP + ADP. It participates in pyrimidine metabolism; CTP biosynthesis via de novo pathway; UDP from UMP (UMPK route): step 1/1. Allosterically activated by GTP. Inhibited by UTP. Functionally, catalyzes the reversible phosphorylation of UMP to UDP. This Thermotoga petrophila (strain ATCC BAA-488 / DSM 13995 / JCM 10881 / RKU-1) protein is Uridylate kinase.